The following is a 333-amino-acid chain: tRNA-dihydrouridine(16) synthase (333 aa).

Residues 19–21 (PMQ) and Gln80 contribute to the FMN site. Residue Cys110 is the Proton donor of the active site. FMN-binding positions include Lys151, 211–213 (NGD), and 235–236 (GR).

This sequence belongs to the Dus family. DusC subfamily. It depends on FMN as a cofactor.

The enzyme catalyses 5,6-dihydrouridine(16) in tRNA + NADP(+) = uridine(16) in tRNA + NADPH + H(+). It catalyses the reaction 5,6-dihydrouridine(16) in tRNA + NAD(+) = uridine(16) in tRNA + NADH + H(+). Functionally, catalyzes the synthesis of 5,6-dihydrouridine (D), a modified base found in the D-loop of most tRNAs, via the reduction of the C5-C6 double bond in target uridines. Specifically modifies U16 in tRNAs. This Neisseria meningitidis serogroup B (strain ATCC BAA-335 / MC58) protein is tRNA-dihydrouridine(16) synthase.